A 365-amino-acid polypeptide reads, in one-letter code: Large ribosomal subunit protein uL3 (365 aa).

A disordered region spans residues 343–365; it reads RPPKKKPPVQRPQITYVSVESKQ. Residues 354 to 365 show a composition bias toward polar residues; that stretch reads PQITYVSVESKQ.

Belongs to the universal ribosomal protein uL3 family. Part of the 50S ribosomal subunit. Forms a cluster with proteins L14 and L24e.

Functionally, one of the primary rRNA binding proteins, it binds directly near the 3'-end of the 23S rRNA, where it nucleates assembly of the 50S subunit. The chain is Large ribosomal subunit protein uL3 from Pyrococcus furiosus (strain ATCC 43587 / DSM 3638 / JCM 8422 / Vc1).